Consider the following 357-residue polypeptide: Serpentine receptor class epsilon-30 (357 aa).

Helical transmembrane passes span I31–M51, L61–I81, L121–L141, I165–I185, F192–I212, L253–F273, and L283–I303.

It belongs to the nematode receptor-like protein sre family.

It is found in the membrane. The chain is Serpentine receptor class epsilon-30 (sre-30) from Caenorhabditis elegans.